The following is a 442-amino-acid chain: D-aminoacyl-tRNA deacylase (442 aa).

It belongs to the DtdA deacylase family. As to quaternary structure, monomer. It depends on Zn(2+) as a cofactor.

The enzyme catalyses a D-aminoacyl-tRNA + H2O = a tRNA + a D-alpha-amino acid + H(+). The catalysed reaction is glycyl-tRNA(Ala) + H2O = tRNA(Ala) + glycine + H(+). D-aminoacyl-tRNA deacylase with broad substrate specificity. By recycling D-aminoacyl-tRNA to D-amino acids and free tRNA molecules, this enzyme counteracts the toxicity associated with the formation of D-aminoacyl-tRNA entities in vivo. This Methanospirillum hungatei JF-1 (strain ATCC 27890 / DSM 864 / NBRC 100397 / JF-1) protein is D-aminoacyl-tRNA deacylase.